Here is a 98-residue protein sequence, read N- to C-terminus: Leydig cell tumor 10 kDa protein homolog (98 aa).

Disordered stretches follow at residues 1–38 (MAQG…RVIA) and 73–98 (SLPK…KMPA). Over residues 16 to 25 (SKAAAAAASA) the composition is skewed to low complexity. The span at 28–38 (RGPRKGGRVIA) shows a compositional bias: basic residues. The segment covering 73 to 83 (SLPKKLALLKA) has biased composition (low complexity).

It belongs to the UPF0390 family.

Functionally, may have a potential role in hypercalcemia of malignancy. The polypeptide is Leydig cell tumor 10 kDa protein homolog (Bos taurus (Bovine)).